We begin with the raw amino-acid sequence, 555 residues long: WRKY transcription factor WRKY24 (555 aa).

Disordered stretches follow at residues 133–183 and 197–248; these read TAPA…AGAN and SEMA…CTFP. A compositionally biased stretch (low complexity) spans 163–183; that stretch reads QQQQQPWGYQQQPAGMDAGAN. Positions 214–278 form a DNA-binding region, WRKY 1; it reads SQRRSSDDGY…YKGTHNHAKP (65 aa). The short motif at 253–259 is the Nuclear localization signal element; it reads KKKVERS. The tract at residues 270–365 is disordered; the sequence is KGTHNHAKPQ…DGEGISMAGN (96 aa). Polar residues-rich tracts occupy residues 277 to 294 and 310 to 320; these read KPQN…QVLQ and TAATPENSSAS. The span at 347–356 shows a compositional bias: basic and acidic residues; sequence DSKRWRKDGD. Positions 379–444 form a DNA-binding region, WRKY 2; the sequence is SDIDILDDGY…YEGKHNHDVP (66 aa). The interval 466-555 is transcription repression of gibberellic acid (GA)-induced promoters; that stretch reads HPYLPNQPPP…DDMFFQNSLY (90 aa). The interval 514-555 is disordered; that stretch reads FDDARGSYMSQHQQQQRQNDAMHASRAKEEPGDDMFFQNSLY.

The protein belongs to the WRKY group II-a family. Expressed in aleurone cells. Mostly expressed in aleurone layers and leaves, and, to a lower extent, in roots, panicles and embryos.

It is found in the nucleus. In terms of biological role, transcription activator. Interacts specifically with the W box (5'-(T)TGAC[CT]-3'), a frequently occurring elicitor-responsive cis-acting element. Negative regulator of both gibberellic acid (GA) and abscisic acid (ABA) signaling in aleurone cells, probably by interfering with GAM1, via the specific repression of GA- and ABA-induced promoters. The polypeptide is WRKY transcription factor WRKY24 (Oryza sativa subsp. japonica (Rice)).